A 507-amino-acid polypeptide reads, in one-letter code: Bifunctional purine biosynthesis protein PurH (507 aa).

Residues 1 to 144 (MKRALLSVSD…KNSDSVWAVV (144 aa)) form the MGS-like domain.

This sequence belongs to the PurH family.

The catalysed reaction is (6R)-10-formyltetrahydrofolate + 5-amino-1-(5-phospho-beta-D-ribosyl)imidazole-4-carboxamide = 5-formamido-1-(5-phospho-D-ribosyl)imidazole-4-carboxamide + (6S)-5,6,7,8-tetrahydrofolate. The enzyme catalyses IMP + H2O = 5-formamido-1-(5-phospho-D-ribosyl)imidazole-4-carboxamide. Its pathway is purine metabolism; IMP biosynthesis via de novo pathway; 5-formamido-1-(5-phospho-D-ribosyl)imidazole-4-carboxamide from 5-amino-1-(5-phospho-D-ribosyl)imidazole-4-carboxamide (10-formyl THF route): step 1/1. It functions in the pathway purine metabolism; IMP biosynthesis via de novo pathway; IMP from 5-formamido-1-(5-phospho-D-ribosyl)imidazole-4-carboxamide: step 1/1. The chain is Bifunctional purine biosynthesis protein PurH from Lacticaseibacillus paracasei (strain ATCC 334 / BCRC 17002 / CCUG 31169 / CIP 107868 / KCTC 3260 / NRRL B-441) (Lactobacillus paracasei).